The primary structure comprises 333 residues: MFERQSNNPEPIEVSDNNPERESTADALLTTRIYISNLDYSSTEDELIEYLKDYKPLSVLVPSHTVRGFRSNHVKPLGIAYADFETPEKAREAVEALNETNFKNRNLKVKLYVPFSPENVCKPAPKPRRLSKLRRSKKPADEENNAASQDPTVEATQERGQASEDPENAANNAKQAKPTSDDTVYCGYLPKNTTDADLREHFKDYNPQEIWIFRTRAAKGPMHLQLHRHYTAALITLNSPETIAKIAEVTSTKKILGKKISVKPAYISKIQEVKKIAEQTGIAERNQTNKGAIKPNSGNGGQPAGPGVAGEPSNPQQNCDNSNNVQPGVSVVA.

Positions 1–22 are disordered; that stretch reads MFERQSNNPEPIEVSDNNPERE. Residues 31 to 114 form the RRM 1 domain; sequence TRIYISNLDY…RNLKVKLYVP (84 aa). Disordered regions lie at residues 123 to 185 and 281 to 333; these read PAPK…DTVY and GIAE…SVVA. Positions 125–137 are enriched in basic residues; sequence PKPRRLSKLRRSK. 2 stretches are compositionally biased toward polar residues: residues 145-160 and 169-182; these read NAAS…QERG and AANN…TSDD. Residues 182–267 enclose the RRM 2 domain; that stretch reads DTVYCGYLPK…KKISVKPAYI (86 aa). Residues 298-308 are compositionally biased toward gly residues; it reads GNGGQPAGPGV. Over residues 313-327 the composition is skewed to polar residues; the sequence is SNPQQNCDNSNNVQP.

Belongs to the RRT5 family.

Functionally, may be involved in the modulation of rDNA transcription. In Vanderwaltozyma polyspora (strain ATCC 22028 / DSM 70294 / BCRC 21397 / CBS 2163 / NBRC 10782 / NRRL Y-8283 / UCD 57-17) (Kluyveromyces polysporus), this protein is Regulator of rDNA transcription protein 5 (RRT5).